Consider the following 394-residue polypeptide: NADH dehydrogenase [ubiquinone] iron-sulfur protein 2 (394 aa).

The span at 1–16 shows a compositional bias: polar residues; it reads MTTKNRQIKNFTSNFG. Residues 1–22 form a disordered region; that stretch reads MTTKNRQIKNFTSNFGPQHPAA.

This sequence belongs to the complex I 49 kDa subunit family. In terms of assembly, complex I is composed of about 45 different subunits. This is a component of the iron-sulfur (IP) fragment of the enzyme.

It localises to the mitochondrion. The catalysed reaction is a ubiquinone + NADH + 5 H(+)(in) = a ubiquinol + NAD(+) + 4 H(+)(out). In terms of biological role, core subunit of the mitochondrial membrane respiratory chain NADH dehydrogenase (Complex I) that is believed to belong to the minimal assembly required for catalysis. Complex I functions in the transfer of electrons from NADH to the respiratory chain. The immediate electron acceptor for the enzyme is believed to be ubiquinone. Component of the iron-sulfur (IP) fragment of the enzyme. This Nicotiana sylvestris (Wood tobacco) protein is NADH dehydrogenase [ubiquinone] iron-sulfur protein 2 (NAD7).